A 325-amino-acid polypeptide reads, in one-letter code: Glyoxylate/hydroxypyruvate reductase B (325 aa).

Residues arginine 237 and glutamate 266 contribute to the active site. The Proton donor role is filled by histidine 285.

It belongs to the D-isomer specific 2-hydroxyacid dehydrogenase family. GhrB subfamily. In terms of assembly, homodimer.

It is found in the cytoplasm. It catalyses the reaction glycolate + NADP(+) = glyoxylate + NADPH + H(+). The catalysed reaction is (R)-glycerate + NAD(+) = 3-hydroxypyruvate + NADH + H(+). The enzyme catalyses (R)-glycerate + NADP(+) = 3-hydroxypyruvate + NADPH + H(+). Catalyzes the NADPH-dependent reduction of glyoxylate and hydroxypyruvate into glycolate and glycerate, respectively. The chain is Glyoxylate/hydroxypyruvate reductase B from Serratia proteamaculans (strain 568).